A 214-amino-acid polypeptide reads, in one-letter code: ATP phosphoribosyltransferase (214 aa).

Belongs to the ATP phosphoribosyltransferase family. Short subfamily. Heteromultimer composed of HisG and HisZ subunits.

The protein resides in the cytoplasm. It catalyses the reaction 1-(5-phospho-beta-D-ribosyl)-ATP + diphosphate = 5-phospho-alpha-D-ribose 1-diphosphate + ATP. It functions in the pathway amino-acid biosynthesis; L-histidine biosynthesis; L-histidine from 5-phospho-alpha-D-ribose 1-diphosphate: step 1/9. Functionally, catalyzes the condensation of ATP and 5-phosphoribose 1-diphosphate to form N'-(5'-phosphoribosyl)-ATP (PR-ATP). Has a crucial role in the pathway because the rate of histidine biosynthesis seems to be controlled primarily by regulation of HisG enzymatic activity. The sequence is that of ATP phosphoribosyltransferase from Leptothrix cholodnii (strain ATCC 51168 / LMG 8142 / SP-6) (Leptothrix discophora (strain SP-6)).